A 138-amino-acid polypeptide reads, in one-letter code: Fusaristatin A biosynthesis cluster protein FGSG_08206 (138 aa).

The Stress-response A/B barrel domain occupies 33–130; it reads VHRVTMFKMP…TIDGMMTVFF (98 aa).

The protein operates within secondary metabolite biosynthesis. Part of the gene cluster that mediates the biosynthesis of the lipopeptide fusaristatin A. Fusaristatin A consists of a polyketide chain linked to three amino acid residues glutamine (Gln), dehydroalanine (dehydro-Ala), and beta-aminoisobutyric acid. The biosynthesis starts with formation of a linear polyketide chain by the highly reducing polyketide synthase PKS6. The gene cluster does not contain an acyl-CoA ligase or an acyl-transferase, and it is therefore predicted that the polyketide is transferred directly to the nonribosomal peptide synthetase NRPS7. Modules 1-3 from NRPS7 incorporate dehydro-Ala, Gln, and beta-aminoisobutyric acid in the compound, which is released by cyclization. The beta-aminoisobutyric acid units are most likely not freely available to the NRPS, but can be synthesized from thymine, which requires a dehydrogenase, a monooxygenase, and an aminotransferase. The fusaristatin A cluster contains a cytochrome P450 monooxygenase (FGSG_08207) and an aminotransferase (FGSG_17085), which theoretically can perform two of the enzymatic steps. The enzymes may however also be involved in biosynthesis of dehydroalanine or modification of the polyketide. The dehydro-Ala residue can be a result of cyclization, where serine is dehydrated. The last gene of the cluster encodes a protein with an A/B barrel domain found in variable enzymes, which hampers functional prediction. The protein is Fusaristatin A biosynthesis cluster protein FGSG_08206 of Gibberella zeae (strain ATCC MYA-4620 / CBS 123657 / FGSC 9075 / NRRL 31084 / PH-1) (Wheat head blight fungus).